Here is a 134-residue protein sequence, read N- to C-terminus: ATP synthase epsilon chain (134 aa).

This sequence belongs to the ATPase epsilon chain family. F-type ATPases have 2 components, CF(1) - the catalytic core - and CF(0) - the membrane proton channel. CF(1) has five subunits: alpha(3), beta(3), gamma(1), delta(1), epsilon(1). CF(0) has three main subunits: a, b and c.

It localises to the cell membrane. Its function is as follows. Produces ATP from ADP in the presence of a proton gradient across the membrane. This Listeria welshimeri serovar 6b (strain ATCC 35897 / DSM 20650 / CCUG 15529 / CIP 8149 / NCTC 11857 / SLCC 5334 / V8) protein is ATP synthase epsilon chain.